The primary structure comprises 167 residues: Lipoprotein signal peptidase (167 aa).

4 helical membrane passes run 8 to 28 (TFLT…VVLL), 46 to 66 (WGHF…FGLF), 70 to 90 (KIPL…FLGI), and 101 to 121 (IALT…LFHG). Residues Asp125 and Asp143 contribute to the active site. Residues 139 to 159 (FNLADAFISLGTLLLVGHLYF) traverse the membrane as a helical segment.

The protein belongs to the peptidase A8 family.

It localises to the cell inner membrane. The enzyme catalyses Release of signal peptides from bacterial membrane prolipoproteins. Hydrolyzes -Xaa-Yaa-Zaa-|-(S,diacylglyceryl)Cys-, in which Xaa is hydrophobic (preferably Leu), and Yaa (Ala or Ser) and Zaa (Gly or Ala) have small, neutral side chains.. It participates in protein modification; lipoprotein biosynthesis (signal peptide cleavage). Its function is as follows. This protein specifically catalyzes the removal of signal peptides from prolipoproteins. The chain is Lipoprotein signal peptidase from Chlamydia muridarum (strain MoPn / Nigg).